Consider the following 317-residue polypeptide: MTRIVFMGTPDFSVPVLRTLIEDGYEVVGVVTQPDRPKGRKKIMTPPPVKAEAERHGIPVLQPEKVRLEEEIEKVLSLKPDLIVTAAFGQILPKQLLDGPKYGCINVHASLLPELRGGAPIHYSILQGKKKTGVTIMYMVEKLDAGDMISKIEVEIDETDNVGTLHDKLSIAGAKLLSETVPNVISGNIKPIKQDESKATYAPNIKREQERIDWAKPGEEIYNQIRGLNPWPVAYTTLNGQNMKVWASEKVAAKTEAAPGTVIRTEQNGIVVASGNSTALLITELQPAGKKRMKGEDFVRGKNVQPGDVLGEANEEN.

110-113 (SLLP) provides a ligand contact to (6S)-5,6,7,8-tetrahydrofolate. The segment at 292-317 (RMKGEDFVRGKNVQPGDVLGEANEEN) is disordered.

The protein belongs to the Fmt family.

It carries out the reaction L-methionyl-tRNA(fMet) + (6R)-10-formyltetrahydrofolate = N-formyl-L-methionyl-tRNA(fMet) + (6S)-5,6,7,8-tetrahydrofolate + H(+). In terms of biological role, attaches a formyl group to the free amino group of methionyl-tRNA(fMet). The formyl group appears to play a dual role in the initiator identity of N-formylmethionyl-tRNA by promoting its recognition by IF2 and preventing the misappropriation of this tRNA by the elongation apparatus. In Bacillus velezensis (strain DSM 23117 / BGSC 10A6 / LMG 26770 / FZB42) (Bacillus amyloliquefaciens subsp. plantarum), this protein is Methionyl-tRNA formyltransferase.